A 997-amino-acid chain; its full sequence is Protein argonaute 5 (997 aa).

Gly residues-rich tracts occupy residues M1–R16 and G43–G59. The disordered stretch occupies residues M1–A144. Over residues S93 to S106 the composition is skewed to low complexity. Residues V116–E129 are compositionally biased toward polar residues. Residues V360–E471 enclose the PAZ domain. Positions L638 to E958 constitute a Piwi domain. Residues D721 and D807 each contribute to the a divalent metal cation site. Interaction with guide RNA stretches follow at residues K847–R848, H893–R901, and Y930–R952. H947 contacts a divalent metal cation.

This sequence belongs to the argonaute family. Ago subfamily. Mg(2+) serves as cofactor. Mn(2+) is required as a cofactor.

Functionally, involved in RNA-mediated post-transcriptional gene silencing (PTGS). Main component of the RNA-induced silencing complex (RISC) that binds to a short guide RNA such as a microRNA (miRNA) or small interfering RNA (siRNA). RISC uses the mature miRNA or siRNA as a guide for slicer-directed cleavage of homologous mRNAs to repress gene expression. Associates with siRNAs of various sizes, from 21-24 nucleotide in length and preferentially recruits small RNAs with a 5' terminal cytosine. Probably involved in antiviral RNA silencing. Associates with siRNAs derived from cucumber mosaic virus (CMV). Targeted by the turnip yellows virus (TuYV) protein P0 (via F-box-like domain) for probable proteasome degradation and thereby inactivating AGO5 function in RNA silencing. This is Protein argonaute 5 (AGO5) from Arabidopsis thaliana (Mouse-ear cress).